The following is a 114-amino-acid chain: UPF0342 protein SSP0954 (114 aa).

The protein belongs to the UPF0342 family.

The chain is UPF0342 protein SSP0954 from Staphylococcus saprophyticus subsp. saprophyticus (strain ATCC 15305 / DSM 20229 / NCIMB 8711 / NCTC 7292 / S-41).